Reading from the N-terminus, the 153-residue chain is NAD(P)H-quinone oxidoreductase subunit N (153 aa).

It belongs to the complex I NdhN subunit family. As to quaternary structure, NDH-1 can be composed of about 15 different subunits; different subcomplexes with different compositions have been identified which probably have different functions.

It is found in the cellular thylakoid membrane. The catalysed reaction is a plastoquinone + NADH + (n+1) H(+)(in) = a plastoquinol + NAD(+) + n H(+)(out). The enzyme catalyses a plastoquinone + NADPH + (n+1) H(+)(in) = a plastoquinol + NADP(+) + n H(+)(out). Its function is as follows. NDH-1 shuttles electrons from an unknown electron donor, via FMN and iron-sulfur (Fe-S) centers, to quinones in the respiratory and/or the photosynthetic chain. The immediate electron acceptor for the enzyme in this species is believed to be plastoquinone. Couples the redox reaction to proton translocation, and thus conserves the redox energy in a proton gradient. Cyanobacterial NDH-1 also plays a role in inorganic carbon-concentration. The sequence is that of NAD(P)H-quinone oxidoreductase subunit N from Synechococcus sp. (strain RCC307).